Consider the following 76-residue polypeptide: MSKGIHFEQSITELEEIVRQLEKGELTLEESLKQFEKGISLARRCQNALNQAEQKIETLTGTDSNIELDSDEQTSD.

The protein belongs to the XseB family. In terms of assembly, heterooligomer composed of large and small subunits.

It localises to the cytoplasm. The enzyme catalyses Exonucleolytic cleavage in either 5'- to 3'- or 3'- to 5'-direction to yield nucleoside 5'-phosphates.. In terms of biological role, bidirectionally degrades single-stranded DNA into large acid-insoluble oligonucleotides, which are then degraded further into small acid-soluble oligonucleotides. The sequence is that of Exodeoxyribonuclease 7 small subunit from Legionella pneumophila (strain Paris).